A 408-amino-acid polypeptide reads, in one-letter code: Tripartite motif-containing protein 59 (408 aa).

The segment at 10-60 (CSICYSLFEDPRVLPCSHTFCRSCLEGVIQLSSNFSIWRPLRVPLKCPNCR) adopts an RING-type zinc-finger fold. Residues 92 to 134 (SDVATCSEHYRQPLNVYCLLDKKLVCGHCLTIGKHNGHPIDDL) form a B box-type zinc finger. Residues Cys97, His100, Cys120, and His126 each coordinate Zn(2+). Positions 163–247 (LIEKLKEQKA…LNTSIQKEES (85 aa)) form a coiled coil. Residues 333 to 353 (ANPLSVTFIFTVIIAIAVLSF) form a helical membrane-spanning segment.

Belongs to the TRIM/RBCC family. In terms of assembly, interacts with ECSIT.

The protein resides in the endoplasmic reticulum membrane. Its function is as follows. May serve as a multifunctional regulator for innate immune signaling pathways. The protein is Tripartite motif-containing protein 59 (TRIM59) of Gallus gallus (Chicken).